Reading from the N-terminus, the 399-residue chain is Telomeric repeat-binding factor 2-interacting protein 1 (399 aa).

Alanine 2 is subject to N-acetylalanine. 2 positions are modified to phosphoserine: serine 36 and serine 43. The BRCT domain occupies 78 to 101; sequence FISTQYILDCVERNERLELEAYRL. A disordered region spans residues 104-132; the sequence is ASAADTGSEAKPGALAEGAAEPEPQRHAG. The span at 112–125 shows a compositional bias: low complexity; sequence EAKPGALAEGAAEP. Lysine 114 participates in a covalent cross-link: Glycyl lysine isopeptide (Lys-Gly) (interchain with G-Cter in SUMO2). The 61-residue stretch at 128-188 folds into the Myb-like domain; sequence QRHAGRIAFT…SLKDRYLKHL (61 aa). Serine 154 and serine 156 each carry phosphoserine. Residue lysine 194 forms a Glycyl lysine isopeptide (Lys-Gly) (interchain with G-Cter in SUMO2) linkage. Disordered stretches follow at residues 196 to 244 and 264 to 311; these read LLGD…EEIQ and VVVD…QPEV. A phosphoserine mark is found at serine 203 and serine 206. Residues lysine 208, lysine 212, and lysine 240 each participate in a glycyl lysine isopeptide (Lys-Gly) (interchain with G-Cter in SUMO2) cross-link. Positions 280–304 are enriched in acidic residues; sequence CDDDPPTPEEDSETQPDEEEEEEEE. Residue lysine 372 forms a Glycyl lysine isopeptide (Lys-Gly) (interchain with G-Cter in SUMO2) linkage. The short motif at 383-399 is the Nuclear localization signal element; that stretch reads KKFGAQNVARRIEFRKK.

This sequence belongs to the RAP1 family. Associates with the I-kappa-B-kinase (IKK) core complex, composed of CHUK, IKBKB and IKBKG. Homodimer. Component of the shelterin complex (telosome) composed of TERF1, TERF2, TINF2, TERF2IP ACD and POT1. Interacts with TERF2; the interaction is direct. Does not interact with TERF1. Interacts with SLX4/BTBD12. As to expression, ubiquitous. Highly expressed.

Its subcellular location is the nucleus. The protein localises to the cytoplasm. The protein resides in the chromosome. It is found in the telomere. Its function is as follows. Acts both as a regulator of telomere function and as a transcription regulator. Involved in the regulation of telomere length and protection as a component of the shelterin complex (telosome). In contrast to other components of the shelterin complex, it is dispensible for telomere capping and does not participate in the protection of telomeres against non-homologous end-joining (NHEJ)-mediated repair. Instead, it is required to negatively regulate telomere recombination and is essential for repressing homology-directed repair (HDR), which can affect telomere length. Does not bind DNA directly: recruited to telomeric double-stranded 5'-TTAGGG-3' repeats via its interaction with TERF2. Independently of its function in telomeres, also acts as a transcription regulator: recruited to extratelomeric 5'-TTAGGG-3' sites via its association with TERF2 or other factors, and regulates gene expression. When cytoplasmic, associates with the I-kappa-B-kinase (IKK) complex and acts as a regulator of the NF-kappa-B signaling by promoting IKK-mediated phosphorylation of RELA/p65, leading to activate expression of NF-kappa-B target genes. In Homo sapiens (Human), this protein is Telomeric repeat-binding factor 2-interacting protein 1 (TERF2IP).